The primary structure comprises 427 residues: Anhydro-N-acetylmuramic acid kinase (427 aa).

32–39 (GTSLDGMD) is an ATP binding site.

This sequence belongs to the anhydro-N-acetylmuramic acid kinase family.

It carries out the reaction 1,6-anhydro-N-acetyl-beta-muramate + ATP + H2O = N-acetyl-D-muramate 6-phosphate + ADP + H(+). It functions in the pathway amino-sugar metabolism; 1,6-anhydro-N-acetylmuramate degradation. Its pathway is cell wall biogenesis; peptidoglycan recycling. In terms of biological role, catalyzes the specific phosphorylation of 1,6-anhydro-N-acetylmuramic acid (anhMurNAc) with the simultaneous cleavage of the 1,6-anhydro ring, generating MurNAc-6-P. Is required for the utilization of anhMurNAc either imported from the medium or derived from its own cell wall murein, and thus plays a role in cell wall recycling. In Psychrobacter cryohalolentis (strain ATCC BAA-1226 / DSM 17306 / VKM B-2378 / K5), this protein is Anhydro-N-acetylmuramic acid kinase.